The sequence spans 1163 residues: Integrin alpha-X (1163 aa).

Residues Met1–Gly19 form the signal peptide. Residues Phe20–Pro1107 are Extracellular-facing. 2 FG-GAP repeats span residues Asp23–Pro78 and Ile79–Leu138. Asn61 carries N-linked (GlcNAc...) asparagine glycosylation. A disulfide bridge connects residues Cys69 and Cys76. The N-linked (GlcNAc...) asparagine glycan is linked to Asn89. 2 disulfide bridges follow: Cys108-Cys126 and Cys116-Cys145. Mg(2+)-binding residues include Asp157, Ser159, Ser161, and Asp259. Positions Arg165–Thr339 constitute a VWFA domain. 5 FG-GAP repeats span residues Glu340 to Ile391, Asn392 to Trp443, Arg444 to Trp504, Asp507 to Ser565, and Gln570 to Ala630. The N-linked (GlcNAc...) asparagine glycan is linked to Asn392. Ca(2+) contacts are provided by Asp466, Asp468, Asp470, and Asp474. The cysteines at positions 495 and 506 are disulfide-linked. Ca(2+) contacts are provided by Asp530, Asn532, Asp534, Asp538, Asp593, Asp597, and Asp601. Intrachain disulfides connect Cys639-Cys722 and Cys655-Cys712. 2 N-linked (GlcNAc...) asparagine glycosylation sites follow: Asn697 and Asn735. 2 disulfide bridges follow: Cys771/Cys777 and Cys848/Cys863. N-linked (GlcNAc...) asparagine glycosylation is found at Asn899 and Asn939. Intrachain disulfides connect Cys998–Cys1022 and Cys1027–Cys1032. An N-linked (GlcNAc...) asparagine glycan is attached at Asn1050. Residues Leu1108 to Tyr1128 form a helical membrane-spanning segment. Residues Lys1129–Lys1163 lie on the Cytoplasmic side of the membrane. Positions Gly1131–Arg1135 match the GFFKR motif motif.

The protein belongs to the integrin alpha chain family. In terms of assembly, heterodimer of an alpha and a beta subunit. Alpha-X associates with beta-2. Predominantly expressed in monocytes and granulocytes.

It localises to the membrane. In terms of biological role, integrin alpha-X/beta-2 is a receptor for fibrinogen. It recognizes the sequence G-P-R in fibrinogen. It mediates cell-cell interaction during inflammatory responses. It is especially important in monocyte adhesion and chemotaxis. This Homo sapiens (Human) protein is Integrin alpha-X (ITGAX).